A 488-amino-acid chain; its full sequence is Probable aldehyde dehydrogenase (488 aa).

240–245 is an NAD(+) binding site; sequence GSSVTG. Catalysis depends on residues E262 and C296.

It belongs to the aldehyde dehydrogenase family.

The catalysed reaction is an aldehyde + NAD(+) + H2O = a carboxylate + NADH + 2 H(+). Its function is as follows. Involved in an alpha-terpineol oxidation system. The sequence is that of Probable aldehyde dehydrogenase (terPE) from Pseudomonas sp.